We begin with the raw amino-acid sequence, 388 residues long: Oxytocin receptor (388 aa).

Residues 1–38 (MEGTPAANWSIELDLGSGVPPGAEGNLTAGPPRRNEAL) are Extracellular-facing. N-linked (GlcNAc...) asparagine glycosylation is found at Asn-8 and Asn-26. Residues 39–63 (ARVEVAVLCLILFLALSGNACVLLA) traverse the membrane as a helical segment. Residues 64–74 (LRTTRHKHSRL) lie on the Cytoplasmic side of the membrane. The chain crosses the membrane as a helical span at residues 75 to 97 (FFFMKHLSIADLVVAVFQVLPQL). Topologically, residues 98 to 113 (LWDITFRFYGPDLLCR) are extracellular. An intrachain disulfide couples Cys-112 to Cys-187. The chain crosses the membrane as a helical span at residues 114 to 135 (LVKYLQVVGMFASTYLLLLMSL). The Cytoplasmic portion of the chain corresponds to 136 to 154 (DRCLAICQPLRSLRRRTDR). The chain crosses the membrane as a helical span at residues 155 to 175 (LAVLATWLGCLVASVPQVHIF). Residues 176–202 (SLREVADGVFDCWAVFIQPWGPKAYVT) lie on the Extracellular side of the membrane. A helical transmembrane segment spans residues 203–225 (WITLAVYIVPVIVLAACYGLISF). Residues 226–274 (KIWQNLRLKTAAAAAAAEGSDAAGGAGRAALARVSSVKLISKAKIRTVK) are Cytoplasmic-facing. A helical transmembrane segment spans residues 275-293 (MTFIIVLAFIVCWTPFFFV). Topologically, residues 294-308 (QMWSVWDVNAPKEAS) are extracellular. The helical transmembrane segment at 309–331 (AFIIAMLLASLNSCCNPWIYMLF) threads the bilayer. Over 332-388 (TGHLFHELVQRFLCCSARYLKGSRPGETSISKKSNSSTFVLSRRSSSQRSCSQPSSA) the chain is Cytoplasmic. The tract at residues 354-388 (SRPGETSISKKSNSSTFVLSRRSSSQRSCSQPSSA) is disordered. A phosphoserine mark is found at Ser-365 and Ser-367. A compositionally biased stretch (low complexity) spans 365–388 (SNSSTFVLSRRSSSQRSCSQPSSA).

Belongs to the G-protein coupled receptor 1 family. Vasopressin/oxytocin receptor subfamily.

It is found in the cell membrane. Its function is as follows. Receptor for oxytocin. The activity of this receptor is mediated by G proteins which activate a phosphatidylinositol-calcium second messenger system. The chain is Oxytocin receptor (Oxtr) from Mus musculus (Mouse).